The chain runs to 64 residues: Large ribosomal subunit protein bL35 (64 aa).

This sequence belongs to the bacterial ribosomal protein bL35 family.

The protein is Large ribosomal subunit protein bL35 of Pseudomonas savastanoi pv. phaseolicola (strain 1448A / Race 6) (Pseudomonas syringae pv. phaseolicola (strain 1448A / Race 6)).